We begin with the raw amino-acid sequence, 458 residues long: Alpha-2C adrenergic receptor (458 aa).

Residues Met-1–Val-51 lie on the Extracellular side of the membrane. Asn-19 and Asn-33 each carry an N-linked (GlcNAc...) asparagine glycan. Residues Ala-52–Val-76 form a helical membrane-spanning segment. At Leu-77–Leu-88 the chain is on the cytoplasmic side. The helical transmembrane segment at Phe-89 to Met-114 threads the bilayer. Residues Ala-115 to Cys-124 lie on the Extracellular side of the membrane. Cys-124 and Cys-202 are oxidised to a cystine. A helical membrane pass occupies residues Gly-125–Leu-147. Topologically, residues Asp-148–Val-168 are cytoplasmic. A helical membrane pass occupies residues Lys-169–Tyr-191. Residues Arg-192–Glu-207 are Extracellular-facing. Residues Thr-208–Ala-231 form a helical membrane-spanning segment. Topologically, residues Arg-232–Val-379 are cytoplasmic. Positions Ser-245 to Arg-343 are disordered. The span at Arg-291–Arg-303 shows a compositional bias: basic residues. Residues Leu-380 to Ile-403 traverse the membrane as a helical segment. Residues Cys-404–Lys-416 lie on the Extracellular side of the membrane. A helical membrane pass occupies residues Phe-417–Asn-437. Residues Gln-438–Gln-458 lie on the Cytoplasmic side of the membrane.

This sequence belongs to the G-protein coupled receptor 1 family. Adrenergic receptor subfamily. ADRA2C sub-subfamily.

Its subcellular location is the cell membrane. Alpha-2 adrenergic receptors mediate the catecholamine-induced inhibition of adenylate cyclase through the action of G proteins. This Rattus norvegicus (Rat) protein is Alpha-2C adrenergic receptor (Adra2c).